The following is a 407-amino-acid chain: BMP-like protein unc-129 (407 aa).

A signal peptide spans 1 to 18; that stretch reads MRRLPIVLLLSVFSIANC. Residues N27, N42, and N211 are each glycosylated (N-linked (GlcNAc...) asparagine). The interval 252-283 is disordered; that stretch reads DDREPIKRKNGKKNSLSEEISSEDVWQGFGEE. N395 carries N-linked (GlcNAc...) asparagine glycosylation.

The protein belongs to the TGF-beta family. As to quaternary structure, interacts with netrin receptor unc-5; the interaction is direct.

The protein localises to the secreted. It is found in the extracellular space. Functionally, required for the migration of axonal growth-cones and distal tip cells (DTC) along the dorsal-ventral axis of the body wall. Acts cell nonautonomously and independently of the classical daf-4, sma-6 or daf-1 TGFbeta receptor signaling. During axon migration, facilitates long-range repulsive guidance of unc-6/netrin by enhancing unc-5-unc-40 signaling at the expense of unc-5 alone signaling, probably through direct interaction with receptor unc-5. Involved in cell-cell contact formation in sensory rays in the developing male tail, via a pathway involving plx-2 and mab-20/semaphorin-2A. The protein is BMP-like protein unc-129 of Caenorhabditis elegans.